The primary structure comprises 477 residues: Ribulose bisphosphate carboxylase large chain (477 aa).

The propeptide occupies 1 to 2; the sequence is MS. Position 3 is an N-acetylproline (proline 3). At lysine 14 the chain carries N6,N6,N6-trimethyllysine. Positions 123 and 173 each coordinate substrate. The active-site Proton acceptor is lysine 175. Substrate is bound at residue lysine 177. Positions 201, 203, and 204 each coordinate Mg(2+). Lysine 201 is modified (N6-carboxylysine). Residue histidine 294 is the Proton acceptor of the active site. Positions 295, 327, and 379 each coordinate substrate.

The protein belongs to the RuBisCO large chain family. Type I subfamily. In terms of assembly, heterohexadecamer of 8 large chains and 8 small chains; disulfide-linked. The disulfide link is formed within the large subunit homodimers. Mg(2+) serves as cofactor. In terms of processing, the disulfide bond which can form in the large chain dimeric partners within the hexadecamer appears to be associated with oxidative stress and protein turnover.

It is found in the plastid. The protein resides in the chloroplast. The enzyme catalyses 2 (2R)-3-phosphoglycerate + 2 H(+) = D-ribulose 1,5-bisphosphate + CO2 + H2O. It catalyses the reaction D-ribulose 1,5-bisphosphate + O2 = 2-phosphoglycolate + (2R)-3-phosphoglycerate + 2 H(+). Its function is as follows. RuBisCO catalyzes two reactions: the carboxylation of D-ribulose 1,5-bisphosphate, the primary event in carbon dioxide fixation, as well as the oxidative fragmentation of the pentose substrate in the photorespiration process. Both reactions occur simultaneously and in competition at the same active site. In Hyophorbe lagenicaulis (Bottle palm), this protein is Ribulose bisphosphate carboxylase large chain.